The sequence spans 322 residues: Cytochrome c biogenesis protein CcsA (322 aa).

Helical transmembrane passes span 9 to 29 (ILTHISFSIVSIVITLHLITL), 44 to 64 (GMIATFLCLTGLLTTRWIYSG), 71 to 91 (LYESLIFLSWSFSLIHIVPYF), 98 to 118 (LTTITASITIFTQGFATSGLL), 143 to 163 (MILSYAALLCGSLLSVALLVI), 226 to 246 (VISLGFIFLTIGILSGAVWAN), 253 to 273 (WSWDPKETWAFITWIVFAIYL), and 287 to 307 (AIVATLGFLIIWICYFGVNLL).

It belongs to the CcmF/CycK/Ccl1/NrfE/CcsA family. As to quaternary structure, may interact with Ccs1.

The protein localises to the plastid. It is found in the chloroplast thylakoid membrane. Functionally, required during biogenesis of c-type cytochromes (cytochrome c6 and cytochrome f) at the step of heme attachment. This chain is Cytochrome c biogenesis protein CcsA, found in Helianthus annuus (Common sunflower).